The chain runs to 444 residues: Docking protein 3 (444 aa).

A PH domain is found at 7 to 123 (PVKDGLLYQQ…WMDPICQLAF (117 aa)). Residues 47–66 (DVRDGGLGPGGDRPAGPGRR) form a disordered region. The residue at position 138 (serine 138) is a Phosphoserine. The IRS-type PTB domain occupies 157-261 (EVAEFPVVVQ…ARQRERLPEL (105 aa)). Phosphoserine is present on residues serine 274, serine 308, and serine 314. Phosphotyrosine is present on tyrosine 325. A disordered region spans residues 354 to 390 (GLSNGGPEAQEGPPGGRSPLGSPIYHNSEELSWPGSA). The segment covering 358 to 376 (GGPEAQEGPPGGRSPLGSP) has biased composition (low complexity). Serine 371 bears the Phosphoserine mark.

Belongs to the DOK family. Type A subfamily. As to quaternary structure, on tyrosine phosphorylation, interacts with CSK and INPP5D/SHIP1 via their SH2 domains. Binds ABL1 through the PTB domain and in a kinase-dependent manner. Does not interact with RasGAP. Constitutively tyrosine-phosphorylated. In terms of processing, on IL2 stimulation, phosphorylated on C-terminal tyrosine residues possibly by Src kinases. Can also be phosphorylated by ABL1 kinase.

It is found in the cytoplasm. Its subcellular location is the cell membrane. Functionally, DOK proteins are enzymatically inert adaptor or scaffolding proteins. They provide a docking platform for the assembly of multimolecular signaling complexes. DOK3 is a negative regulator of JNK signaling in B-cells through interaction with INPP5D/SHIP1. May modulate ABL1 function. The sequence is that of Docking protein 3 (Dok3) from Rattus norvegicus (Rat).